We begin with the raw amino-acid sequence, 458 residues long: Ammonium transporter Rh type B (458 aa).

The Cytoplasmic portion of the chain corresponds to 1-13; that stretch reads MAGSPSRAAGRRL. A helical membrane pass occupies residues 14 to 34; it reads QLPLLCLFLQGATAVLFAVFV. At 35–61 the chain is on the extracellular side; that stretch reads RYNHKTDAALWHRSNHSNADNEFYFRY. An N-linked (GlcNAc...) asparagine glycan is attached at N49. A helical transmembrane segment spans residues 62-82; it reads PSFQDVHAMVFVGFGFLMVFL. The Cytoplasmic segment spans residues 83 to 86; that stretch reads QRYG. A helical membrane pass occupies residues 87 to 107; the sequence is FSSVGFTFLLAAFALQWSTLV. Residues 108-124 are Extracellular-facing; it reads QGFLHSFHGGHIHVGVE. A helical membrane pass occupies residues 125–145; the sequence is SMINADFCAGAVLISFGAVLG. At 146–149 the chain is on the cytoplasmic side; the sequence is KTGP. The helical transmembrane segment at 150–170 threads the bilayer; that stretch reads AQLLLMALLEVVLFGINEFVL. Residues 171–178 lie on the Extracellular side of the membrane; it reads LHLLGVRD. The helical transmembrane segment at 179–201 threads the bilayer; sequence AGGSMTIHTFGAYFGLVLSRVLY. The Cytoplasmic segment spans residues 202–219; it reads RPQLEKSKHRQGSVYHSD. Residues 220 to 240 form a helical membrane-spanning segment; sequence LFTMIGTIFLWIFWPSFNAAL. Residues 241–251 are Extracellular-facing; the sequence is TALGAGQHRTA. The helical transmembrane segment at 252–272 threads the bilayer; the sequence is LNTYYSLAASTLGTFALSALV. Topologically, residues 273-282 are cytoplasmic; sequence GEDGRLDMVH. Residues 283 to 303 traverse the membrane as a helical segment; it reads IQNAALTGGVVVGTSSKMMLT. Position 304 (P304) is a topological domain, extracellular. Residues 305 to 325 traverse the membrane as a helical segment; that stretch reads FGALAAGFLAGTVSTLGYKFF. Topologically, residues 326-346 are cytoplasmic; it reads TPILESKFKVQDTCGVHNLHG. Residues 347–367 traverse the membrane as a helical segment; the sequence is MPGVLGALLGVLVAGLATHEA. Residues 368-393 lie on the Extracellular side of the membrane; sequence YGDGLESVFPLIAEGQRSATSQAMHQ. A helical transmembrane segment spans residues 394 to 414; that stretch reads LFGLFVTLMFASVGGGLGGLL. Over 415–458 the chain is Cytoplasmic; it reads LKLPFLDSPPDSQCYEDQVHWQVPGEHEDKAQRPLRVEEADTYA. The segment at 416 to 424 is interaction with ANK3; the sequence is KLPFLDSPP. A Basolateral sorting signal motif is present at residues 429–432; that stretch reads YEDQ. Residues 439-458 are disordered; it reads GEHEDKAQRPLRVEEADTYA.

It belongs to the ammonium transporter (TC 2.A.49) family. Rh subfamily. As to quaternary structure, interacts (via C-terminus) with ANK2 and ANK3; required for targeting to the basolateral membrane. Post-translationally, N-glycosylated.

The protein resides in the cell membrane. It localises to the basolateral cell membrane. It carries out the reaction NH4(+)(in) = NH4(+)(out). The enzyme catalyses methylamine(out) = methylamine(in). The catalysed reaction is CO2(out) = CO2(in). In terms of biological role, ammonium transporter involved in the maintenance of acid-base homeostasis. Transports ammonium and its related derivative methylammonium across the basolateral plasma membrane of epithelial cells likely contributing to renal transepithelial ammonia transport and ammonia metabolism. May transport either NH4(+) or NH3 ammonia species predominantly mediating an electrogenic NH4(+) transport. May act as a CO2 channel providing for renal acid secretion. The sequence is that of Ammonium transporter Rh type B (RHBG) from Gorilla gorilla gorilla (Western lowland gorilla).